We begin with the raw amino-acid sequence, 127 residues long: Small ribosomal subunit protein uS11 (127 aa).

This sequence belongs to the universal ribosomal protein uS11 family. Part of the 30S ribosomal subunit. Interacts with proteins S7 and S18. Binds to IF-3.

In terms of biological role, located on the platform of the 30S subunit, it bridges several disparate RNA helices of the 16S rRNA. Forms part of the Shine-Dalgarno cleft in the 70S ribosome. In Streptococcus mutans serotype c (strain ATCC 700610 / UA159), this protein is Small ribosomal subunit protein uS11.